A 133-amino-acid polypeptide reads, in one-letter code: MTDEQIYAFCDTNKDDIRCKCIYPDKSIVRIGIDTRLPYYCWYEPCKRSDALLPASLKKNISRCNVSDCTISLGNVSITDSKLDVNNVCDSKRVATENIAVRYLNQEIRYPIIDIKWLPIGLLALAILILAFF.

Residues isoleucine 112–phenylalanine 132 form a helical membrane-spanning segment.

Belongs to the orthopoxvirus OPG104 family. As to quaternary structure, part of a stable entry-fusion complex (EFC) which is at least composed of proteins OPG143, OPG147, OPG155, OPG086, OPG094, OPG107, OPG104, and OPG099. Formation of the viral membrane is necessary for the assembly of the complex.

The protein localises to the virion membrane. Functionally, envelope protein part of the entry-fusion complex responsible for the virus membrane fusion with host cell membrane during virus entry. Also plays a role in cell-cell fusion (syncytium formation). This is Protein OPG104 (OPG104) from Cynomys gunnisoni (Gunnison's prairie dog).